Reading from the N-terminus, the 404-residue chain is MDTPPNVLSQQITDAVSKKGPVVRIGINEVAVTDTSLARTLYASFLKWPEWYESPKEKLFYGEPSLFGMTQPKEHSARRRILSNVFSKSLRSSTHVQNVTREILVERMIRQAQIPSGRSVVRDVRPVHEAFDMDFLTAFAFTPAFSTQFLNESDKFSEFRSWLRELRGGSPDAAKEAKCKLENWCLDMCRAYRASLTPTHQRISHCTADALYGAGLQESEVAAELLDHFITAKKNLAVVHTYSVYMLSIYTEVQERLRSELRSLSLDKLSIDDLASLPFFSAVISEVMRTHTEIKALTPRLVPAGGYWIPQRISGQSTFLPAGTVVSSAREALHLNEEIFPQPLSFWPERWLESADPKLAGKAQPQEMQNHLWYFGSGTHGCVAREYALYGETKLQFYMESAEL.

Cys-382 serves as a coordination point for heme.

This sequence belongs to the cytochrome P450 family. The cofactor is heme.

The protein operates within secondary metabolite biosynthesis. In terms of biological role, cytochrome P450 monooxygenase; part of the cluster that mediates the biosynthesis of a highly modified cyclo-arginine-tryptophan dipeptide (cRW). The first step of the pathway is perfornmed by the arginine-containing cyclodipeptide synthase (RCPDS) avaA that acts as the scaffold-generating enzyme and is responsible for formation of the cyclo-Arg-Trp (cRW) diketopiperazine. AvaB then acts as a multifunctional flavoenzyme that is responsible for generating the cyclo-Arg-formylkynurenine DKP, which can be deformylated by avaC. AvaB then further catalyzes an additional N-oxidation followed by cyclization and dehydration. The next step is an N-acetylation of the guanidine group catalyzed by the arginine N-acetyltransferase avaD. The roles of the additional enzymes identified within the ava cluster still have to be determined. This is Cytochrome P450 monooxygenase avaI from Aspergillus versicolor.